The following is a 289-amino-acid chain: Glyoxylate/succinic semialdehyde reductase 1 (289 aa).

An N-acetylmethionine modification is found at methionine 1. Residues 4–18 and threonine 95 each bind NADP(+); that span reads GFLG…MSMN. Lysine 170 is an active-site residue. Lysine 238 contributes to the NADP(+) binding site.

Belongs to the HIBADH-related family. NP60 subfamily.

It localises to the cytoplasm. The protein localises to the cytosol. It carries out the reaction glycolate + NADP(+) = glyoxylate + NADPH + H(+). The catalysed reaction is 4-hydroxybutanoate + NADP(+) = succinate semialdehyde + NADPH + H(+). Its activity is regulated as follows. The ratio of NADPH/NADP(+) may regulate enzymatic activity. Catalyzes the NADPH-dependent reduction of glyoxylate to glycolate as well as succinic semialdehyde (SSA) to gamma-hydroxybutyrate in vitro. May function in redox homeostasis and play a role in oxidative stress tolerance by detoxifying glyoxylate and SSA generated in glycolate metabolism and GABA metabolism, respectively. The sequence is that of Glyoxylate/succinic semialdehyde reductase 1 (GLYR1) from Arabidopsis thaliana (Mouse-ear cress).